A 95-amino-acid polypeptide reads, in one-letter code: Aspartyl/glutamyl-tRNA(Asn/Gln) amidotransferase subunit C (95 aa).

Belongs to the GatC family. Heterotrimer of A, B and C subunits.

The enzyme catalyses L-glutamyl-tRNA(Gln) + L-glutamine + ATP + H2O = L-glutaminyl-tRNA(Gln) + L-glutamate + ADP + phosphate + H(+). It catalyses the reaction L-aspartyl-tRNA(Asn) + L-glutamine + ATP + H2O = L-asparaginyl-tRNA(Asn) + L-glutamate + ADP + phosphate + 2 H(+). Allows the formation of correctly charged Asn-tRNA(Asn) or Gln-tRNA(Gln) through the transamidation of misacylated Asp-tRNA(Asn) or Glu-tRNA(Gln) in organisms which lack either or both of asparaginyl-tRNA or glutaminyl-tRNA synthetases. The reaction takes place in the presence of glutamine and ATP through an activated phospho-Asp-tRNA(Asn) or phospho-Glu-tRNA(Gln). This Chlorobium phaeobacteroides (strain DSM 266 / SMG 266 / 2430) protein is Aspartyl/glutamyl-tRNA(Asn/Gln) amidotransferase subunit C.